Reading from the N-terminus, the 591-residue chain is Probable translation initiation factor IF-2 (591 aa).

The region spanning 7–223 (LRTPIVCVMG…LLGLAQRFLE (217 aa)) is the tr-type G domain. The interval 16–23 (GHVDHGKT) is G1. 16–23 (GHVDHGKT) lines the GTP pocket. The G2 stretch occupies residues 41–45 (AITQH). Residues 78-81 (DTPG) are G3. Residues 78 to 82 (DTPGH) and 132 to 135 (NKID) contribute to the GTP site. A G4 region spans residues 132 to 135 (NKID). The G5 stretch occupies residues 200–202 (SAI).

It belongs to the TRAFAC class translation factor GTPase superfamily. Classic translation factor GTPase family. IF-2 subfamily.

Its function is as follows. Function in general translation initiation by promoting the binding of the formylmethionine-tRNA to ribosomes. Seems to function along with eIF-2. This is Probable translation initiation factor IF-2 from Methanococcoides burtonii (strain DSM 6242 / NBRC 107633 / OCM 468 / ACE-M).